A 590-amino-acid chain; its full sequence is MRTHYADKVDSSLIDQTITLCGWVHRRRDHGGLIFIDLRDREGLVQVVCNPTESTVFKVAESLRNEYVIKVTGKVHKRPEGTVNPHIPSGEVEIAASDITLLNKSKPLPFNIDEYQEVSEEVRLKFRYLDLRRPEVAQRLKMRSYIIREIRRFLDERGFLDIETPMLTKSTPEGARDYLVPSRTHPGQFFALPQSPQIFKEILMVAGFDRYYQIVRCFRDEDLRADRQPEFTQLDLEMSFVEEKDIQQLMETMIRHLFSTFLNVPLPDPFPRITYDEAIKTYGTDRPDLRNPLTLVDVTDLMKSVEFKVFKEPANNPHGRIAVLRLPKGAELSRKAIDDYTQFVGIYGAKGLAYIKVENIDNGTGGLHSPILKFLPENVIAEILKRTQAQSGDILFFGADKAKIVNESLGALRDRLCADLNLYEGQWKPVWVVDFPMFDREDVGDWQALHHPFTALQETDPEKVIANPGDVLSRAYDMVLNGSEIGGGSIRINDIGMQYAVLKVLGISKEMAEAQFGHLLMALQFGSPPLGGIAFGLDRLVAIMTGASSIRDVIAFPKTQTAQCPLTNAPAQVETLQLETLGLKVSKHRK.

Glu173 lines the L-aspartate pocket. The segment at 197–200 (QIFK) is aspartate. Position 219 (Arg219) interacts with L-aspartate. ATP is bound by residues 219-221 (RDE) and Gln228. Residue His450 participates in L-aspartate binding. Glu484 provides a ligand contact to ATP. Arg491 lines the L-aspartate pocket. Position 536–539 (536–539 (GLDR)) interacts with ATP.

The protein belongs to the class-II aminoacyl-tRNA synthetase family. Type 1 subfamily. In terms of assembly, homodimer.

The protein resides in the cytoplasm. The catalysed reaction is tRNA(Asx) + L-aspartate + ATP = L-aspartyl-tRNA(Asx) + AMP + diphosphate. Its function is as follows. Aspartyl-tRNA synthetase with relaxed tRNA specificity since it is able to aspartylate not only its cognate tRNA(Asp) but also tRNA(Asn). Reaction proceeds in two steps: L-aspartate is first activated by ATP to form Asp-AMP and then transferred to the acceptor end of tRNA(Asp/Asn). This Coxiella burnetii (strain RSA 493 / Nine Mile phase I) protein is Aspartate--tRNA(Asp/Asn) ligase.